Reading from the N-terminus, the 117-residue chain is uncharacterized protein (117 aa).

This is an uncharacterized protein from Acheta domesticus (House cricket).